The primary structure comprises 154 residues: Ribosome maturation factor RimP (154 aa).

Belongs to the RimP family.

The protein resides in the cytoplasm. In terms of biological role, required for maturation of 30S ribosomal subunits. In Natranaerobius thermophilus (strain ATCC BAA-1301 / DSM 18059 / JW/NM-WN-LF), this protein is Ribosome maturation factor RimP.